The chain runs to 230 residues: Cytochrome c oxidase subunit 2 (230 aa).

Residues 1–26 (MATPAQLGLMDAASPVMEEMIYFHDH) lie on the Mitochondrial intermembrane side of the membrane. A helical membrane pass occupies residues 27-48 (VMLVLILITCLIFYSMLVLISS). Over 49–62 (KYIYRFLTDGHVIE) the chain is Mitochondrial matrix. Residues 63-82 (TVWTVIPAIILVVVALPSLK) traverse the membrane as a helical segment. The Mitochondrial intermembrane segment spans residues 83 to 230 (LLYLTDELDN…GWCDMMLDEE (148 aa)). Cu cation-binding residues include His161, Cys196, Glu198, Cys200, His204, and Met207. Glu198 provides a ligand contact to Mg(2+).

It belongs to the cytochrome c oxidase subunit 2 family. As to quaternary structure, component of the cytochrome c oxidase (complex IV, CIV), a multisubunit enzyme composed of a catalytic core of 3 subunits and several supernumerary subunits. The complex exists as a monomer or a dimer and forms supercomplexes (SCs) in the inner mitochondrial membrane with ubiquinol-cytochrome c oxidoreductase (cytochrome b-c1 complex, complex III, CIII). It depends on Cu cation as a cofactor.

The protein localises to the mitochondrion inner membrane. The enzyme catalyses 4 Fe(II)-[cytochrome c] + O2 + 8 H(+)(in) = 4 Fe(III)-[cytochrome c] + 2 H2O + 4 H(+)(out). Component of the cytochrome c oxidase, the last enzyme in the mitochondrial electron transport chain which drives oxidative phosphorylation. The respiratory chain contains 3 multisubunit complexes succinate dehydrogenase (complex II, CII), ubiquinol-cytochrome c oxidoreductase (cytochrome b-c1 complex, complex III, CIII) and cytochrome c oxidase (complex IV, CIV), that cooperate to transfer electrons derived from NADH and succinate to molecular oxygen, creating an electrochemical gradient over the inner membrane that drives transmembrane transport and the ATP synthase. Cytochrome c oxidase is the component of the respiratory chain that catalyzes the reduction of oxygen to water. Electrons originating from reduced cytochrome c in the intermembrane space (IMS) are transferred via the dinuclear copper A center (CU(A)) of subunit 2 and heme A of subunit 1 to the active site in subunit 1, a binuclear center (BNC) formed by heme A3 and copper B (CU(B)). The BNC reduces molecular oxygen to 2 water molecules using 4 electrons from cytochrome c in the IMS and 4 protons from the mitochondrial matrix. This Branchiostoma floridae (Florida lancelet) protein is Cytochrome c oxidase subunit 2 (COII).